Consider the following 371-residue polypeptide: Protein IQ-DOMAIN 7 (371 aa).

The interval 1–32 (MGGSGNWIRSLISNRKPVNDQQEKLSDKSSKK) is disordered. A compositionally biased stretch (basic and acidic residues) spans 17 to 29 (PVNDQQEKLSDKS). IQ domains are found at residues 93–121 (REWA…AVVR) and 122–144 (IQAI…CMQA). The segment at 125–141 (IFRGRQVRKQAAVTLRC) is calmodulin-binding. Disordered stretches follow at residues 285 to 308 (SGMS…PVAF) and 327 to 371 (LTQS…SQRS). Polar residues-rich tracts occupy residues 297–308 (STSSTSQSPVAF) and 327–341 (LTQS…SGLS).

It belongs to the IQD family. Binds to multiple calmodulin (CaM) in the presence of Ca(2+) and CaM-like proteins.

It is found in the nucleus. The protein resides in the nucleus envelope. Its subcellular location is the cytoplasm. It localises to the cytoskeleton. Functionally, may be involved in cooperative interactions with calmodulins or calmodulin-like proteins. Recruits calmodulin proteins to microtubules, thus being a potential scaffold in cellular signaling and trafficking. May associate with nucleic acids and regulate gene expression at the transcriptional or post-transcriptional level. This Arabidopsis thaliana (Mouse-ear cress) protein is Protein IQ-DOMAIN 7.